The sequence spans 316 residues: Ribosomal RNA small subunit methyltransferase H (316 aa).

Residues 35–37, Asp55, Phe84, Asp105, and Gln112 contribute to the S-adenosyl-L-methionine site; that span reads AGH.

The protein belongs to the methyltransferase superfamily. RsmH family.

The protein localises to the cytoplasm. The catalysed reaction is cytidine(1402) in 16S rRNA + S-adenosyl-L-methionine = N(4)-methylcytidine(1402) in 16S rRNA + S-adenosyl-L-homocysteine + H(+). Specifically methylates the N4 position of cytidine in position 1402 (C1402) of 16S rRNA. This chain is Ribosomal RNA small subunit methyltransferase H, found in Streptococcus thermophilus (strain ATCC BAA-250 / LMG 18311).